The following is a 495-amino-acid chain: Probable cytochrome P450 513C1 (495 aa).

A helical membrane pass occupies residues 1-21 (MNYLVLILVSLVSIYFLFIKN). Cysteine 441 contributes to the heme binding site.

It belongs to the cytochrome P450 family. Requires heme as cofactor.

The protein resides in the membrane. The protein is Probable cytochrome P450 513C1 (cyp513C1) of Dictyostelium discoideum (Social amoeba).